Here is a 104-residue protein sequence, read N- to C-terminus: Co-chaperonin GroES (104 aa).

The protein belongs to the GroES chaperonin family. In terms of assembly, heptamer of 7 subunits arranged in a ring. Interacts with the chaperonin GroEL.

Its subcellular location is the cytoplasm. Together with the chaperonin GroEL, plays an essential role in assisting protein folding. The GroEL-GroES system forms a nano-cage that allows encapsulation of the non-native substrate proteins and provides a physical environment optimized to promote and accelerate protein folding. GroES binds to the apical surface of the GroEL ring, thereby capping the opening of the GroEL channel. This is Co-chaperonin GroES from Acidiphilium cryptum (strain JF-5).